Consider the following 90-residue polypeptide: MNIKPIGERVLLKPIKKEEKTKSGILLSSKSSNTDTQNQAEVIALGKGEKLEGIKVGDKVIFNKFSGNEIEDGDVKYLIVNAEDILAIIG.

Belongs to the GroES chaperonin family. Heptamer of 7 subunits arranged in a ring. Interacts with the chaperonin GroEL.

It is found in the cytoplasm. Functionally, together with the chaperonin GroEL, plays an essential role in assisting protein folding. The GroEL-GroES system forms a nano-cage that allows encapsulation of the non-native substrate proteins and provides a physical environment optimized to promote and accelerate protein folding. GroES binds to the apical surface of the GroEL ring, thereby capping the opening of the GroEL channel. The chain is Co-chaperonin GroES from Fusobacterium nucleatum subsp. nucleatum (strain ATCC 25586 / DSM 15643 / BCRC 10681 / CIP 101130 / JCM 8532 / KCTC 2640 / LMG 13131 / VPI 4355).